The sequence spans 273 residues: 4-hydroxy-tetrahydrodipicolinate reductase (273 aa).

NAD(+)-binding positions include 12–17 and glutamate 38; that span reads GAGGRM. Arginine 39 is a binding site for NADP(+). Residues 102–104 and 126–129 contribute to the NAD(+) site; these read GTT and AANF. Histidine 159 acts as the Proton donor/acceptor in catalysis. Histidine 160 lines the (S)-2,3,4,5-tetrahydrodipicolinate pocket. Catalysis depends on lysine 163, which acts as the Proton donor. Residue 169-170 coordinates (S)-2,3,4,5-tetrahydrodipicolinate; that stretch reads GT.

Belongs to the DapB family. As to quaternary structure, homotetramer.

The protein resides in the cytoplasm. It carries out the reaction (S)-2,3,4,5-tetrahydrodipicolinate + NAD(+) + H2O = (2S,4S)-4-hydroxy-2,3,4,5-tetrahydrodipicolinate + NADH + H(+). The catalysed reaction is (S)-2,3,4,5-tetrahydrodipicolinate + NADP(+) + H2O = (2S,4S)-4-hydroxy-2,3,4,5-tetrahydrodipicolinate + NADPH + H(+). Its pathway is amino-acid biosynthesis; L-lysine biosynthesis via DAP pathway; (S)-tetrahydrodipicolinate from L-aspartate: step 4/4. Its function is as follows. Catalyzes the conversion of 4-hydroxy-tetrahydrodipicolinate (HTPA) to tetrahydrodipicolinate. The sequence is that of 4-hydroxy-tetrahydrodipicolinate reductase from Salmonella dublin (strain CT_02021853).